We begin with the raw amino-acid sequence, 382 residues long: S-adenosylmethionine decarboxylase proenzyme (382 aa).

Phe-32 contributes to the substrate binding site. Catalysis depends on residues Glu-33 and Glu-36. Leu-87 provides a ligand contact to substrate. Residue Ser-90 is the Schiff-base intermediate with substrate; via pyruvic acid of the active site. At Ser-90 the chain carries Pyruvic acid (Ser); by autocatalysis. The active-site Proton donor; for catalytic activity is the Cys-104. Phe-248 is a binding site for substrate. Catalysis depends on proton acceptor; for processing activity residues Ser-254 and His-267. Glu-271 serves as a coordination point for substrate.

This sequence belongs to the eukaryotic AdoMetDC family. In terms of assembly, heterotetramer of two alpha and two beta chains. The cofactor is pyruvate. In terms of processing, is synthesized initially as an inactive proenzyme. Formation of the active enzyme involves a self-maturation process in which the active site pyruvoyl group is generated from an internal serine residue via an autocatalytic post-translational modification. Two non-identical subunits are generated from the proenzyme in this reaction, and the pyruvate is formed at the N-terminus of the alpha chain, which is derived from the carboxyl end of the proenzyme. The post-translation cleavage follows an unusual pathway, termed non-hydrolytic serinolysis, in which the side chain hydroxyl group of the serine supplies its oxygen atom to form the C-terminus of the beta chain, while the remainder of the serine residue undergoes an oxidative deamination to produce ammonia and the pyruvoyl group blocking the N-terminus of the alpha chain.

It carries out the reaction S-adenosyl-L-methionine + H(+) = S-adenosyl 3-(methylsulfanyl)propylamine + CO2. The protein operates within amine and polyamine biosynthesis; S-adenosylmethioninamine biosynthesis; S-adenosylmethioninamine from S-adenosyl-L-methionine: step 1/1. This chain is S-adenosylmethionine decarboxylase proenzyme, found in Leishmania donovani.